Here is a 955-residue protein sequence, read N- to C-terminus: Probable autotransporter YcgV (955 aa).

A disordered region spans residues 616-659 (ASGTVPEPTPNPEPTPAPAQPPIVNPDPTPEPAPTPKPTTTADA). Over residues 622 to 652 (EPTPNPEPTPAPAQPPIVNPDPTPEPAPTPK) the composition is skewed to pro residues. Residues 687-955 (NQSKDGNIWL…QVNGGYRFSF (269 aa)) enclose the Autotransporter domain.

Its function is as follows. Upon overexpression shows increased adherence to polyvinyl chloride (PVC) plates, increased mature biofilm formation. This chain is Probable autotransporter YcgV (ycgV), found in Escherichia coli (strain K12).